A 280-amino-acid polypeptide reads, in one-letter code: Probable endonuclease 4 (280 aa).

The Zn(2+) site is built by histidine 69, histidine 109, glutamate 145, aspartate 179, histidine 182, histidine 216, aspartate 229, histidine 231, and glutamate 261.

It belongs to the AP endonuclease 2 family. Zn(2+) serves as cofactor.

It carries out the reaction Endonucleolytic cleavage to 5'-phosphooligonucleotide end-products.. Endonuclease IV plays a role in DNA repair. It cleaves phosphodiester bonds at apurinic or apyrimidinic (AP) sites, generating a 3'-hydroxyl group and a 5'-terminal sugar phosphate. The protein is Probable endonuclease 4 of Aliarcobacter butzleri (strain RM4018) (Arcobacter butzleri).